A 160-amino-acid chain; its full sequence is MAIEGVLNEGFVTTTADKLINWTRTGSLWPMTFGLACCAVEMMHAGAARYDLDRFGVVFRPSPRQSDVMIVAGTLCNKMAPALRKVYDQMAEPRWVISMGSCANGGGYYHYSYSVVRGCDRIVPVDIYVPGCPPTAEALIYGVIQLQNKIKRTNTIARKG.

Residues Cys37, Cys38, Cys102, and Cys132 each coordinate [4Fe-4S] cluster.

Belongs to the complex I 20 kDa subunit family. NDH-1 is composed of 14 different subunits. Subunits NuoB, C, D, E, F, and G constitute the peripheral sector of the complex. [4Fe-4S] cluster serves as cofactor.

The protein resides in the cell inner membrane. The catalysed reaction is a quinone + NADH + 5 H(+)(in) = a quinol + NAD(+) + 4 H(+)(out). Its function is as follows. NDH-1 shuttles electrons from NADH, via FMN and iron-sulfur (Fe-S) centers, to quinones in the respiratory chain. Couples the redox reaction to proton translocation (for every two electrons transferred, four hydrogen ions are translocated across the cytoplasmic membrane), and thus conserves the redox energy in a proton gradient. The polypeptide is NADH-quinone oxidoreductase subunit B (Cupriavidus pinatubonensis (strain JMP 134 / LMG 1197) (Cupriavidus necator (strain JMP 134))).